The following is an 88-amino-acid chain: Alpha-latrotoxin associated low molecular weight protein 2 (88 aa).

The signal sequence occupies residues 1-19 (MLKLICIVFLVTVLTFVVG). Cystine bridges form between C30–C66, C46–C62, and C49–C75.

It belongs to the arthropod CHH/MIH/GIH/VIH hormone family. Expressed by the venom gland.

It is found in the secreted. In terms of biological role, may increase the toxicity of alpha-latrotoxin and/or other venom components. Is non-toxic to mice and to the cockroach Periplaneta americana. The protein is Alpha-latrotoxin associated low molecular weight protein 2 of Latrodectus geometricus (Brown widow spider).